Reading from the N-terminus, the 735-residue chain is Transcription factor sphG (735 aa).

The zn(2)-C6 fungal-type DNA-binding region spans 13–40 (CDQCRARKIRCSREKPSCRNCGRLGLQC). Residues 89-110 (TISPSARCPASPASPSPRLSDK) form a disordered region. A compositionally biased stretch (low complexity) spans 91 to 106 (SPSARCPASPASPSPR).

The protein localises to the nucleus. Functionally, transcription factor that regulates the expression of the gene cluster that mediates the biosynthesis of sphingofungins, bioactive molecules acting as sphingolipid inhibitors via inhibiting serine palmitoyl transferase (SPT). This Aspergillus fumigatus (strain CBS 144.89 / FGSC A1163 / CEA10) (Neosartorya fumigata) protein is Transcription factor sphG.